We begin with the raw amino-acid sequence, 606 residues long: Serine/threonine-protein kinase A-Raf (606 aa).

The RBD domain occupies 19–91; it reads GTVKVYLPNK…DGEELIVEVL (73 aa). The Phorbol-ester/DAG-type zinc finger occupies 98-144; that stretch reads MHNFVRKTFFSLAFCDFCLKFLFHGFRCQTCGYKFHQHCSSKVPTVC. H99, C112, C115, C125, C128, H133, C136, and C144 together coordinate Zn(2+). Phosphoserine occurs at positions 157 and 162. Disordered stretches follow at residues 158–207 and 241–290; these read VQDL…NAPL and TDAA…DKKK. The residue at position 181 (T181) is a Phosphothreonine. 3 positions are modified to phosphoserine: S186, S257, and S269. The segment covering 254 to 267 has biased composition (low complexity); sequence PRGSPSPASVSSGR. A compositionally biased stretch (basic and acidic residues) spans 274-289; sequence SPSEQRERKSLADDKK. Residues 310–570 form the Protein kinase domain; sequence VQLLKRIGTG…PQILATIELL (261 aa). Residues 316 to 324 and K336 each bind ATP; that span reads IGTGSFGTV. At T318 the chain carries Phosphothreonine. Catalysis depends on D429, which acts as the Proton acceptor.

The protein belongs to the protein kinase superfamily. TKL Ser/Thr protein kinase family. RAF subfamily. Interacts with TH1L/NELFD. It depends on Zn(2+) as a cofactor. In terms of processing, dephosphorylation by the SHOC2-MRAS-PP1c (SMP) complex consisting of SHOC2, GTP-bound M-Ras/MRAS and the catalytic subunit of protein phosphatase 1 (PPP1CA, PPP1CB or PPP1CC); this relieves inactivation and stimulates kinase activity.

The enzyme catalyses L-seryl-[protein] + ATP = O-phospho-L-seryl-[protein] + ADP + H(+). The catalysed reaction is L-threonyl-[protein] + ATP = O-phospho-L-threonyl-[protein] + ADP + H(+). Its function is as follows. Involved in the transduction of mitogenic signals from the cell membrane to the nucleus. May also regulate the TOR signaling cascade. Phosphorylates PFKFB2. This Sus scrofa (Pig) protein is Serine/threonine-protein kinase A-Raf (ARAF).